Reading from the N-terminus, the 65-residue chain is Large ribosomal subunit protein uL29 (65 aa).

The protein belongs to the universal ribosomal protein uL29 family.

The chain is Large ribosomal subunit protein uL29 from Methylococcus capsulatus (strain ATCC 33009 / NCIMB 11132 / Bath).